The chain runs to 327 residues: Fe-S cluster assembly protein DRE2 (327 aa).

The segment covering 1–14 (MSPATVTIDTTPDF) has biased composition (polar residues). Disordered stretches follow at residues 1–20 (MSPA…GGAP) and 153–179 (NKGE…AAAA). An N-terminal SAM-like domain region spans residues 17-144 (GGAPHSTLLL…EKPAEEVAAV (128 aa)). The segment at 145–214 (PLKFLKKKNK…EDELMTEEDL (70 aa)) is linker. The span at 164-179 (PAAATQPTAPAPAAAA) shows a compositional bias: low complexity. [2Fe-2S] cluster contacts are provided by cysteine 224, cysteine 235, cysteine 238, and cysteine 240. Residues 224-240 (CAPKPGKKRRACKDCTC) form a fe-S binding site A region. Cysteine 290, cysteine 293, cysteine 301, and cysteine 304 together coordinate [4Fe-4S] cluster. Short sequence motifs (cx2C motif) lie at residues 290–293 (CGSC) and 301–304 (CADC). The tract at residues 290 to 304 (CGSCALGDAFRCADC) is fe-S binding site B.

Belongs to the anamorsin family. In terms of assembly, monomer. Interacts with TAH18. Interacts with MIA40. It depends on [2Fe-2S] cluster as a cofactor. [4Fe-4S] cluster serves as cofactor.

The protein localises to the cytoplasm. It localises to the mitochondrion intermembrane space. Component of the cytosolic iron-sulfur (Fe-S) protein assembly (CIA) machinery required for the maturation of extramitochondrial Fe-S proteins. Part of an electron transfer chain functioning in an early step of cytosolic Fe-S biogenesis, facilitating the de novo assembly of a [4Fe-4S] cluster on the scaffold complex CFD1-NBP35. Electrons are transferred to DRE2 from NADPH via the FAD- and FMN-containing protein TAH18. TAH18-DRE2 are also required for the assembly of the diferric tyrosyl radical cofactor of ribonucleotide reductase (RNR), probably by providing electrons for reduction during radical cofactor maturation in the catalytic small subunit RNR2. The polypeptide is Fe-S cluster assembly protein DRE2 (Pyricularia oryzae (strain 70-15 / ATCC MYA-4617 / FGSC 8958) (Rice blast fungus)).